A 219-amino-acid polypeptide reads, in one-letter code: MFKKIIILFLGIFLLSSCTDNFRNYFQRSANNKLLDIKGAKGGKRKPVYNNKYIDLAKKNILEDNIDDDDNDSDANYDSDSLLIGEKIDNIKKNREMYINMIKRDIARQKAESNATQSNNDMTLSKANKKVRKDDSYKEKKIEEELNQIKAMLRETKRDITKYTCPNATVNQNYVPPVTNYENENYPPIKNSRPYNNTSKVKQKFIREDDDNTSNACSI.

An N-terminal signal peptide occupies residues 1-17 (MFKKIIILFLGIFLLSS). The N-palmitoyl cysteine moiety is linked to residue Cys-18. A lipid anchor (S-diacylglycerol cysteine) is attached at Cys-18. The disordered stretch occupies residues 110-136 (KAESNATQSNNDMTLSKANKKVRKDDS). A compositionally biased stretch (polar residues) spans 112–126 (ESNATQSNNDMTLSK). Residues 137-165 (YKEKKIEEELNQIKAMLRETKRDITKYTC) are a coiled coil.

It localises to the cell membrane. This is an uncharacterized protein from Rickettsia prowazekii (strain Madrid E).